We begin with the raw amino-acid sequence, 520 residues long: Poly(A)-specific ribonuclease PNLDC1 (520 aa).

The Mg(2+) site is built by Asp-17, Glu-19, Asp-260, and Asp-354. The helical transmembrane segment at 497–513 (CLLQVCGIVTAWALLAF) threads the bilayer.

The protein belongs to the CAF1 family. Requires Mg(2+) as cofactor.

The protein resides in the endoplasmic reticulum membrane. The enzyme catalyses Exonucleolytic cleavage of poly(A) to 5'-AMP.. 3'-exoribonuclease that has a preference for poly(A) tails of mRNAs, thereby efficiently degrading poly(A) tails. Exonucleolytic degradation of the poly(A) tail is often the first step in the decay of eukaryotic mRNAs and is also used to silence certain maternal mRNAs translationally during oocyte maturation and early embryonic development. May act as a regulator of multipotency in embryonic stem cells. Is a critical factor for proper spermatogenesis, involved in pre-piRNAs processing to generate mature piRNAs. This is Poly(A)-specific ribonuclease PNLDC1 from Pongo abelii (Sumatran orangutan).